An 893-amino-acid chain; its full sequence is Nitrate reductase [NADPH] (893 aa).

The tract at residues 1-83 is disordered; that stretch reads MSVTTQQPAV…KPTPDAHVPR (83 aa). Residues 55-65 are compositionally biased toward pro residues; that stretch reads PDFPLPPPANP. A compositionally biased stretch (basic and acidic residues) spans 71–83; the sequence is DIDKPTPDAHVPR. Residue cysteine 170 participates in Mo-molybdopterin binding. The region spanning 536–611 is the Cytochrome b5 heme-binding domain; the sequence is NRIVELDELK…MPAYHIGTLS (76 aa). Positions 571 and 594 each coordinate heme. The FAD-binding FR-type domain maps to 641 to 752; the sequence is RTWSKALLSS…KGPIGKFEYL (112 aa). FAD contacts are provided by residues 695–698, 712–716, 726–728, serine 776, and threonine 779; these read RSYT, LIKIY, and KMT. NADP(+) is bound at residue 863 to 872; that stretch reads LVLVCGPEGL.

The protein belongs to the nitrate reductase family. In terms of assembly, homodimer. FAD is required as a cofactor. The cofactor is heme. Mo-molybdopterin serves as cofactor.

It catalyses the reaction nitrite + NADP(+) + H2O = nitrate + NADPH + H(+). Its function is as follows. Nitrate reductase is a key enzyme involved in the first step of nitrate assimilation in plants, fungi and bacteria. This chain is Nitrate reductase [NADPH] (NIAD), found in Leptosphaeria maculans (Blackleg fungus).